A 170-amino-acid polypeptide reads, in one-letter code: RNA pyrophosphohydrolase (170 aa).

Residues 6-149 (GFRPNVGIIL…KRDVYRRALK (144 aa)) enclose the Nudix hydrolase domain. Positions 39–60 (GGIKHNESPENALYRELEEEVG) match the Nudix box motif.

The protein belongs to the Nudix hydrolase family. RppH subfamily. Requires a divalent metal cation as cofactor.

Its function is as follows. Accelerates the degradation of transcripts by removing pyrophosphate from the 5'-end of triphosphorylated RNA, leading to a more labile monophosphorylated state that can stimulate subsequent ribonuclease cleavage. The sequence is that of RNA pyrophosphohydrolase from Saccharophagus degradans (strain 2-40 / ATCC 43961 / DSM 17024).